The primary structure comprises 160 residues: Phosphopantetheine adenylyltransferase (160 aa).

T10 contributes to the substrate binding site. ATP-binding positions include 10–11 (TF) and H18. Substrate-binding residues include K42, L74, and R88. ATP-binding positions include 89-91 (GLR), E99, and 124-130 (NSFISST).

The protein belongs to the bacterial CoaD family. In terms of assembly, homohexamer. Mg(2+) is required as a cofactor.

It localises to the cytoplasm. The enzyme catalyses (R)-4'-phosphopantetheine + ATP + H(+) = 3'-dephospho-CoA + diphosphate. It participates in cofactor biosynthesis; coenzyme A biosynthesis; CoA from (R)-pantothenate: step 4/5. In terms of biological role, reversibly transfers an adenylyl group from ATP to 4'-phosphopantetheine, yielding dephospho-CoA (dPCoA) and pyrophosphate. This is Phosphopantetheine adenylyltransferase from Pseudoalteromonas atlantica (strain T6c / ATCC BAA-1087).